Reading from the N-terminus, the 228-residue chain is L-ribulose-5-phosphate 4-epimerase UlaF (228 aa).

Substrate-binding positions include 26 to 27, 43 to 44, and 72 to 73; these read GN, SG, and SS. Zn(2+) contacts are provided by Asp74, His93, and His95. Asp118 functions as the Proton donor/acceptor in the catalytic mechanism. Zn(2+) is bound at residue His167. Tyr225 functions as the Proton donor/acceptor in the catalytic mechanism.

Belongs to the aldolase class II family. AraD/FucA subfamily. The cofactor is Zn(2+).

The catalysed reaction is L-ribulose 5-phosphate = D-xylulose 5-phosphate. The protein operates within cofactor degradation; L-ascorbate degradation; D-xylulose 5-phosphate from L-ascorbate: step 4/4. Its function is as follows. Catalyzes the isomerization of L-ribulose 5-phosphate to D-xylulose 5-phosphate. Is involved in the anaerobic L-ascorbate utilization. In Escherichia coli O17:K52:H18 (strain UMN026 / ExPEC), this protein is L-ribulose-5-phosphate 4-epimerase UlaF.